Reading from the N-terminus, the 764-residue chain is 5-methyltetrahydropteroyltriglutamate--homocysteine methyltransferase (764 aa).

Residues 16 to 19 (RELK) and K112 contribute to the 5-methyltetrahydropteroyltri-L-glutamate site. L-homocysteine-binding positions include 431 to 433 (IGS) and E484. Residues 431 to 433 (IGS) and E484 each bind L-methionine. Residues 515-516 (RC) and W561 each bind 5-methyltetrahydropteroyltri-L-glutamate. An L-homocysteine-binding site is contributed by D599. D599 provides a ligand contact to L-methionine. E605 serves as a coordination point for 5-methyltetrahydropteroyltri-L-glutamate. Zn(2+) is bound by residues H641, C643, and E665. The Proton donor role is filled by H694. A Zn(2+)-binding site is contributed by C726.

Belongs to the vitamin-B12 independent methionine synthase family. It depends on Zn(2+) as a cofactor.

The catalysed reaction is 5-methyltetrahydropteroyltri-L-glutamate + L-homocysteine = tetrahydropteroyltri-L-glutamate + L-methionine. It functions in the pathway amino-acid biosynthesis; L-methionine biosynthesis via de novo pathway; L-methionine from L-homocysteine (MetE route): step 1/1. Its function is as follows. Catalyzes the transfer of a methyl group from 5-methyltetrahydrofolate to homocysteine resulting in methionine formation. The chain is 5-methyltetrahydropteroyltriglutamate--homocysteine methyltransferase from Paraburkholderia phytofirmans (strain DSM 17436 / LMG 22146 / PsJN) (Burkholderia phytofirmans).